A 241-amino-acid polypeptide reads, in one-letter code: 1-(5-phosphoribosyl)-5-[(5-phosphoribosylamino)methylideneamino] imidazole-4-carboxamide isomerase (241 aa).

The active-site Proton acceptor is Asp8. Residue Asp130 is the Proton donor of the active site.

Belongs to the HisA/HisF family.

The protein resides in the cytoplasm. It catalyses the reaction 1-(5-phospho-beta-D-ribosyl)-5-[(5-phospho-beta-D-ribosylamino)methylideneamino]imidazole-4-carboxamide = 5-[(5-phospho-1-deoxy-D-ribulos-1-ylimino)methylamino]-1-(5-phospho-beta-D-ribosyl)imidazole-4-carboxamide. It participates in amino-acid biosynthesis; L-histidine biosynthesis; L-histidine from 5-phospho-alpha-D-ribose 1-diphosphate: step 4/9. This is 1-(5-phosphoribosyl)-5-[(5-phosphoribosylamino)methylideneamino] imidazole-4-carboxamide isomerase from Leptospira borgpetersenii serovar Hardjo-bovis (strain L550).